The chain runs to 623 residues: Scarecrow-like protein 22 (623 aa).

Disordered regions lie at residues 62–90 and 179–203; these read RSPS…AAAA and PNPG…QPGS. Low complexity predominate over residues 63–80; sequence SPSPFVSSSTTTLSSSHG. Residues 235–622 form the GRAS domain; it reads NDQDQSAVII…KELVTVSAWK (388 aa). Residues 242-311 form a leucine repeat I (LRI) region; it reads VIIDQLFSAA…ALHSLLQDSS (70 aa). Positions 330-398 are VHIID; that stretch reads YRAFSETSPF…SSAPSLKITA (69 aa). Positions 361-365 match the VHIID motif; that stretch reads IHIVD. Residues 413 to 448 are leucine repeat II (LRII); that stretch reads FTEENLRSFAGETGVSFEIELLNMEILLNPTYWPLS. The interval 458 to 545 is PFYRE; it reads IAVNLPISSM…RFCVQPSIQK (88 aa). An SAW region spans residues 548-622; that stretch reads TNRYRWMERS…KELVTVSAWK (75 aa).

The protein belongs to the GRAS family. In terms of tissue distribution, expressed in seedlings, roots, leaves and flowers.

The protein localises to the nucleus. In terms of biological role, probable transcription factor involved in plant development. This chain is Scarecrow-like protein 22 (SCL22), found in Arabidopsis thaliana (Mouse-ear cress).